The primary structure comprises 867 residues: MEGLARVFLIGGASKAVRYDEQTTIERVIHVVARGIGISQVAVAHFALRLVTGPSPQTAGSGDSLWLHPMLRITQLPHIYARHLPIGVCDEIKLEMRMRFMPQSVYELQATDSSAFVYLHEQVVDEFFSHVAWRSSVEVALEVAALKVCRDFAEHQHNKGADHHLEDLDIEACIQSLIPNVLHNPGFKHSHLKKTFTAYIKKFSATSPNESIIRSLALLLEVVKFDVELFKASLGAGWTKPVELVVGPHTGLSYRLNERCDSSRLLELRTIAEITIRKMENGSEKTLMQLNLSGAAKPVLITLSTEELSQSLAHLLDGYQMLYNQRDSVFKLKGIERCETLTMHEATIRPKTPNNIDSNIRLRRELITLKELIGGGQFGNVYKAVYHDLEKDERIAVAVKVCKTDAEPADTQLILQESSLMRNFRHSNIIQLIGVCVDQPMWLVLELAPKGELREYLQQEKDWLPLRILTLFCSQICDSLVYLHSTRFVHRDIAARNILVCSPQCVKLADFGLSRALDYDAVYTASRGKLPIKWLAPESVNYRQFSMASDVWMFGVCMWEIFSLGVKPWAGVTNSDVIMHIEQGSRPPCPEKCPTALYNFIRSKMWAIEPHKRPTVDQIYAIIEDVRQQIIQNIPPEQIIVGKPMTAAGVIVAEMSSLPGLTLYRTMEDQKRQAEEDAKWLEQEDDEDEDDQDIDQIPSTSHSSVENIRTSNGYLHHTPTSTRSLRFEDKTSRGLRRSVDGVCDAVTKLQNSFNNLTHNDDFLHSVKEVTSQLREMLIVASGMRDRVTTTTQRTDVDMTKTLIANDMKQMSRVMGKLQVNGHQATYNTLRRDVVRICGELAVNCTTLQLQLTQPPLENEFSSLLSNC.

The region spanning 3–327 (GLARVFLIGG…GYQMLYNQRD (325 aa)) is the FERM domain. The region spanning 367 to 631 (ITLKELIGGG…IIEDVRQQII (265 aa)) is the Protein kinase domain. ATP contacts are provided by residues 373 to 381 (IGGGQFGNV) and lysine 400. Residues 662 to 691 (TLYRTMEDQKRQAEEDAKWLEQEDDEDEDD) adopt a coiled-coil conformation. Residues 674 to 729 (AEEDAKWLEQEDDEDEDDQDIDQIPSTSHSSVENIRTSNGYLHHTPTSTRSLRFED) are disordered. Residues 683–694 (QEDDEDEDDQDI) are compositionally biased toward acidic residues. Residues 698 to 724 (PSTSHSSVENIRTSNGYLHHTPTSTRS) are compositionally biased toward polar residues.

Belongs to the protein kinase superfamily. Tyr protein kinase family. FAK subfamily. Expressed in body wall muscles and some neurons in the head.

Functionally, has apparently no tyrosine kinase activity in vitro when expressed in mammalian cells. This chain is Inactive tyrosine-protein kinase kin-32, found in Caenorhabditis elegans.